The sequence spans 544 residues: Chaperonin GroEL 1 (544 aa).

Residues 29–32 (TLGP), 86–90 (DGTTT), G413, 479–481 (NAA), and D495 each bind ATP. The segment at 525 to 544 (PEPKDNAPAGAGAGGGDFDY) is disordered. Positions 535 to 544 (AGAGGGDFDY) are enriched in gly residues.

This sequence belongs to the chaperonin (HSP60) family. In terms of assembly, forms a cylinder of 14 subunits composed of two heptameric rings stacked back-to-back. Interacts with the co-chaperonin GroES.

It is found in the cytoplasm. The enzyme catalyses ATP + H2O + a folded polypeptide = ADP + phosphate + an unfolded polypeptide.. Together with its co-chaperonin GroES, plays an essential role in assisting protein folding. The GroEL-GroES system forms a nano-cage that allows encapsulation of the non-native substrate proteins and provides a physical environment optimized to promote and accelerate protein folding. The chain is Chaperonin GroEL 1 from Nostoc sp. (strain PCC 7120 / SAG 25.82 / UTEX 2576).